The primary structure comprises 173 residues: Ribosome maturation factor RimM (173 aa).

Positions 97–171 constitute a PRC barrel domain; it reads EGEFFYHEII…QITIEPMEGL (75 aa).

The protein belongs to the RimM family. Binds ribosomal protein uS19.

The protein localises to the cytoplasm. An accessory protein needed during the final step in the assembly of 30S ribosomal subunit, possibly for assembly of the head region. Essential for efficient processing of 16S rRNA. May be needed both before and after RbfA during the maturation of 16S rRNA. It has affinity for free ribosomal 30S subunits but not for 70S ribosomes. The polypeptide is Ribosome maturation factor RimM (Halalkalibacterium halodurans (strain ATCC BAA-125 / DSM 18197 / FERM 7344 / JCM 9153 / C-125) (Bacillus halodurans)).